The sequence spans 381 residues: Succinyl-diaminopimelate desuccinylase (381 aa).

His-68 lines the Zn(2+) pocket. Asp-70 is a catalytic residue. Zn(2+) is bound at residue Asp-101. Residue Glu-135 is the Proton acceptor of the active site. 3 residues coordinate Zn(2+): Glu-136, Glu-164, and His-350.

Belongs to the peptidase M20A family. DapE subfamily. Homodimer. The cofactor is Zn(2+). Co(2+) serves as cofactor.

It carries out the reaction N-succinyl-(2S,6S)-2,6-diaminopimelate + H2O = (2S,6S)-2,6-diaminopimelate + succinate. It participates in amino-acid biosynthesis; L-lysine biosynthesis via DAP pathway; LL-2,6-diaminopimelate from (S)-tetrahydrodipicolinate (succinylase route): step 3/3. In terms of biological role, catalyzes the hydrolysis of N-succinyl-L,L-diaminopimelic acid (SDAP), forming succinate and LL-2,6-diaminopimelate (DAP), an intermediate involved in the bacterial biosynthesis of lysine and meso-diaminopimelic acid, an essential component of bacterial cell walls. The protein is Succinyl-diaminopimelate desuccinylase of Neisseria meningitidis serogroup A / serotype 4A (strain DSM 15465 / Z2491).